The chain runs to 235 residues: Pyridoxine/pyridoxamine 5'-phosphate oxidase (235 aa).

Substrate-binding positions include 30 to 33 and Lys88; that span reads RQEY. FMN is bound by residues 83-88, 98-99, Arg104, Lys105, and Gln127; these read RTVLLK and YT. Residues Tyr145, Arg149, and Ser153 each coordinate substrate. FMN contacts are provided by residues 162-163 and Trp207; that span reads QS. Residue 213–215 participates in substrate binding; that stretch reads RLH. Arg217 contributes to the FMN binding site.

This sequence belongs to the pyridoxamine 5'-phosphate oxidase family. In terms of assembly, homodimer. Requires FMN as cofactor.

The catalysed reaction is pyridoxamine 5'-phosphate + O2 + H2O = pyridoxal 5'-phosphate + H2O2 + NH4(+). The enzyme catalyses pyridoxine 5'-phosphate + O2 = pyridoxal 5'-phosphate + H2O2. It functions in the pathway cofactor metabolism; pyridoxal 5'-phosphate salvage; pyridoxal 5'-phosphate from pyridoxamine 5'-phosphate: step 1/1. Its pathway is cofactor metabolism; pyridoxal 5'-phosphate salvage; pyridoxal 5'-phosphate from pyridoxine 5'-phosphate: step 1/1. Its function is as follows. Catalyzes the oxidation of either pyridoxine 5'-phosphate (PNP) or pyridoxamine 5'-phosphate (PMP) into pyridoxal 5'-phosphate (PLP). The sequence is that of Pyridoxine/pyridoxamine 5'-phosphate oxidase from Bacteroides fragilis (strain YCH46).